The chain runs to 105 residues: Platelet factor 4 (105 aa).

The signal sequence occupies residues 1–29 (MSAAAVFRGLRPSPELLLLGLLLLPAVVA). An O-linked (GalNAc...) threonine; partial glycan is attached at Thr31. 2 disulfide bridges follow: Cys44-Cys71 and Cys46-Cys87. Residue Ser61 is modified to Phosphoserine. 96-102 (KKIIKKL) is a binding site for heparin.

The protein belongs to the intercrine alpha (chemokine CxC) family. As to quaternary structure, homotetramer. Interacts with TNFAIP6 (via Link domain). Interacts with CCR1. Interacts with CXCR3. Interacts with THBD; this interaction enhances generation of activated protein C. In terms of processing, O-linked glycan consists of Gal-GalNAc disaccharide which is modified with sialic acid residues (microheterogeneity).

Its subcellular location is the secreted. In terms of biological role, chemokine released during platelet aggregation that plays a role in different biological processes including hematopoiesis, cell proliferation, differentiation, and activation. Acts via different functional receptors including CCR1, CXCR3A or CXCR3B. Upon interaction with CXCR3A receptor, induces activated T-lymphocytes migration mediated via downstream Ras/extracellular signal-regulated kinase (ERK) signaling. Neutralizes the anticoagulant effect of heparin by binding more strongly to heparin than to the chondroitin-4-sulfate chains of the carrier molecule. Plays a role in the inhibition of hematopoiesis and in the maintenance of hematopoietic stem cell (HSC) quiescence. Chemotactic for neutrophils and monocytes via CCR1. Inhibits endothelial cell proliferation. In cooperation with toll-like receptor 8/TLR8, induces chromatin remodeling and activates inflammatory gene expression via the TBK1-IRF5 axis. In addition, induces myofibroblast differentiation and collagen synthesis in different precursor cells, including endothelial cells, by stimulating endothelial-to-mesenchymal transition. Interacts with thrombomodulin/THBD to enhance the activation of protein C and thus potentiates its anticoagulant activity. The protein is Platelet factor 4 (Pf4) of Rattus norvegicus (Rat).